The sequence spans 408 residues: Cytochrome bc1 complex Rieske iron-sulfur subunit (408 aa).

The next 3 helical transmembrane spans lie at 56–76 (VTFW…TYIF), 98–118 (MLGI…VLYV), and 162–182 (LIMG…IAPM). Positions 293 to 390 (HGPRNAVMLI…ITVDEEGYLI (98 aa)) constitute a Rieske domain. C333, H335, C352, and H355 together coordinate [2Fe-2S] cluster. C338 and C354 are joined by a disulfide.

It belongs to the Rieske iron-sulfur protein family. As to quaternary structure, the cytochrome bc1 complex is composed of a cytochrome b (QcrB), the Rieske iron-sulfur protein (QcrA) and a diheme cytochrome c (QcrC) subunit. The bc1 complex forms a supercomplex with cytochrome c oxidase (cytochrome aa3). Requires [2Fe-2S] cluster as cofactor.

The protein resides in the cell membrane. Functionally, iron-sulfur subunit of the cytochrome bc1 complex, an essential component of the respiratory electron transport chain required for ATP synthesis. The bc1 complex catalyzes the oxidation of menaquinol and the reduction of cytochrome c in the respiratory chain. The bc1 complex operates through a Q-cycle mechanism that couples electron transfer to generation of the proton gradient that drives ATP synthesis. This chain is Cytochrome bc1 complex Rieske iron-sulfur subunit (qcrA), found in Corynebacterium glutamicum (strain ATCC 13032 / DSM 20300 / JCM 1318 / BCRC 11384 / CCUG 27702 / LMG 3730 / NBRC 12168 / NCIMB 10025 / NRRL B-2784 / 534).